A 1712-amino-acid chain; its full sequence is U3 small nucleolar RNA-associated protein 10 (1712 aa).

HEAT repeat units follow at residues 164 to 202 (EELVLRILPVLNSCMQAKYGAETVAACYSIVTVLAGRGE), 490 to 528 (TCDFQNLIPYLLHALADPSAPVRRAAAACTVALSEASGS), 564 to 605 (TLLS…PKHG), 987 to 1025 (TQTISRVVPQLAASLRAKHKNFLTGVSDLLLSFTAAFEH), 1236 to 1275 (VISLISFLPSVEKVLQQSQHTDAKIISVGCIDRIVERFGK), 1605 to 1646 (EEVT…DSAA), and 1667 to 1705 (LGLLPEMLPFISELREDDDEMVERETQRWISQVEGVLGE).

It belongs to the HEATR1/UTP10 family. As to quaternary structure, component of the ribosomal small subunit (SSU) processome.

Its subcellular location is the nucleus. It is found in the nucleolus. Involved in nucleolar processing of pre-18S ribosomal RNA. Involved in ribosome biosynthesis. This Phaeosphaeria nodorum (strain SN15 / ATCC MYA-4574 / FGSC 10173) (Glume blotch fungus) protein is U3 small nucleolar RNA-associated protein 10.